A 397-amino-acid polypeptide reads, in one-letter code: MAKAKFERTKPHVNIGTIGHIDHGKTTLTAAITKVLHDAYPDLNEATPFDNIDKAPEERQRGITISIAHVEYQTEARHYAHVDCPGHADYIKNMITGAAQMDGAILVVAATDGPMPQTKEHVLLARQVGVPYIVVALNKADMVDDEEIMELVELEVRELLSEYEFPGDDLPVVRVSALKALEGDAQWTQSVLDLMKAVDESIPEPERDVDKPFLMPIEDVFTITGRGTVVTGRIERGVLKVNETVDIIGIKTEKTTTTVTGIEMFRKLLDEGQAGENVGLLLRGIKREDVERGQVIIKPGSVTPHTEFEAQAYILSKDEGGRHTPFFNNYRPQFYFRTTDVTGVVHLPEGTEMVMPGDNTEMRVELIQPVAMEEGLKFAIREGGRTVGAGQVTKIVK.

In terms of domain architecture, tr-type G spans 10 to 206; sequence KPHVNIGTIG…AVDESIPEPE (197 aa). A G1 region spans residues 19-26; it reads GHIDHGKT. A GTP-binding site is contributed by 19–26; that stretch reads GHIDHGKT. Threonine 26 is a Mg(2+) binding site. A G2 region spans residues 62-66; it reads GITIS. The tract at residues 83-86 is G3; the sequence is DCPG. GTP is bound by residues 83–87 and 138–141; these read DCPGH and NKAD. A G4 region spans residues 138–141; that stretch reads NKAD. The G5 stretch occupies residues 176-178; sequence SAL.

It belongs to the TRAFAC class translation factor GTPase superfamily. Classic translation factor GTPase family. EF-Tu/EF-1A subfamily. Monomer.

The protein localises to the cytoplasm. It carries out the reaction GTP + H2O = GDP + phosphate + H(+). In terms of biological role, GTP hydrolase that promotes the GTP-dependent binding of aminoacyl-tRNA to the A-site of ribosomes during protein biosynthesis. This chain is Elongation factor Tu-1, found in Streptomyces ramocissimus.